A 490-amino-acid chain; its full sequence is Cyclin-T1-3 (490 aa).

Disordered regions lie at residues 275-391 and 414-490; these read RVAP…GDVA and AAED…RLRS. 2 stretches are compositionally biased toward polar residues: residues 282-298 and 352-365; these read QGND…NQRA and TANS…SSTM. Basic and acidic residues-rich tracts occupy residues 367-391 and 457-490; these read AMKK…GDVA and QEYR…RLRS.

This sequence belongs to the cyclin family. Cyclin T subfamily.

This chain is Cyclin-T1-3 (CYCT1-3), found in Oryza sativa subsp. japonica (Rice).